The following is a 294-amino-acid chain: Halotolerance protein HAL1 (294 aa).

Positions 115-153 are disordered; that stretch reads LKRGTKEQEDINSSTSKKSAVINNFSGEKTPNPRPQSSN. Over residues 125–153 the composition is skewed to polar residues; sequence INSSTSKKSAVINNFSGEKTPNPRPQSSN. Ser-266 carries the post-translational modification Phosphoserine.

It is found in the cytoplasm. Functionally, involved in salt tolerance. The polypeptide is Halotolerance protein HAL1 (HAL1) (Saccharomyces cerevisiae (strain ATCC 204508 / S288c) (Baker's yeast)).